The chain runs to 377 residues: Nitric oxide reductase FlRd-NAD(+) reductase (377 aa).

The protein belongs to the FAD-dependent oxidoreductase family. The cofactor is FAD.

It localises to the cytoplasm. The catalysed reaction is 2 reduced [nitric oxide reductase rubredoxin domain] + NAD(+) + H(+) = 2 oxidized [nitric oxide reductase rubredoxin domain] + NADH. It participates in nitrogen metabolism; nitric oxide reduction. Its function is as follows. One of at least two accessory proteins for anaerobic nitric oxide (NO) reductase. Reduces the rubredoxin moiety of NO reductase. The sequence is that of Nitric oxide reductase FlRd-NAD(+) reductase from Escherichia coli O139:H28 (strain E24377A / ETEC).